The following is a 737-amino-acid chain: Catalase-peroxidase (737 aa).

Residues 1–23 form the signal peptide; sequence MLKKILPVLITLAIVHNTPTAWA. A cross-link (tryptophyl-tyrosyl-methioninium (Trp-Tyr) (with M-249)) is located at residues 102-223; sequence WHGAGTYRIY…LAATQMGLIY (122 aa). The Proton acceptor role is filled by H103. Residues 223-249 constitute a cross-link (tryptophyl-tyrosyl-methioninium (Tyr-Met) (with W-102)); that stretch reads YVNPEGPNGKPDPVAAAKDIREAFARM. Residue H264 coordinates heme b.

This sequence belongs to the peroxidase family. Peroxidase/catalase subfamily. Homodimer or homotetramer. The cofactor is heme b. In terms of processing, formation of the three residue Trp-Tyr-Met cross-link is important for the catalase, but not the peroxidase activity of the enzyme.

The catalysed reaction is H2O2 + AH2 = A + 2 H2O. It carries out the reaction 2 H2O2 = O2 + 2 H2O. Functionally, bifunctional enzyme with both catalase and broad-spectrum peroxidase activity. The polypeptide is Catalase-peroxidase (Yersinia pseudotuberculosis serotype O:3 (strain YPIII)).